Consider the following 327-residue polypeptide: GTPase Obg (327 aa).

The 159-residue stretch at 2 to 160 (HLFKDSLNLI…LNLRLELSLI (159 aa)) folds into the Obg domain. In terms of domain architecture, OBG-type G spans 161-326 (ADIGLVGLPN…LVSEFFSLVK (166 aa)). GTP-binding positions include 167 to 174 (GLPNAGKS), 192 to 196 (FTTKI), 213 to 216 (DLPG), 280 to 283 (SKLD), and 307 to 309 (SIY). The Mg(2+) site is built by serine 174 and threonine 194.

Belongs to the TRAFAC class OBG-HflX-like GTPase superfamily. OBG GTPase family. Monomer. Requires Mg(2+) as cofactor.

It is found in the cytoplasm. In terms of biological role, an essential GTPase which binds GTP, GDP and possibly (p)ppGpp with moderate affinity, with high nucleotide exchange rates and a fairly low GTP hydrolysis rate. Plays a role in control of the cell cycle, stress response, ribosome biogenesis and in those bacteria that undergo differentiation, in morphogenesis control. This Borrelia duttonii (strain Ly) protein is GTPase Obg.